Here is a 361-residue protein sequence, read N- to C-terminus: 3-dehydroquinate synthase (361 aa).

Residues S72–K77, T130–T131, K142, and K151 contribute to the NAD(+) site. Zn(2+) is bound by residues E184, H247, and H264.

It belongs to the sugar phosphate cyclases superfamily. Dehydroquinate synthase family. Co(2+) serves as cofactor. Zn(2+) is required as a cofactor. It depends on NAD(+) as a cofactor.

It is found in the cytoplasm. It carries out the reaction 7-phospho-2-dehydro-3-deoxy-D-arabino-heptonate = 3-dehydroquinate + phosphate. It functions in the pathway metabolic intermediate biosynthesis; chorismate biosynthesis; chorismate from D-erythrose 4-phosphate and phosphoenolpyruvate: step 2/7. Functionally, catalyzes the conversion of 3-deoxy-D-arabino-heptulosonate 7-phosphate (DAHP) to dehydroquinate (DHQ). The chain is 3-dehydroquinate synthase from Bacillus cereus (strain ATCC 10987 / NRS 248).